The chain runs to 503 residues: Probable DNA ligase (503 aa).

Glu210 is a binding site for ATP. Lys212 (N6-AMP-lysine intermediate) is an active-site residue. Arg217, Arg232, Glu261, Phe296, Arg367, and Lys373 together coordinate ATP.

The protein belongs to the ATP-dependent DNA ligase family. Requires Mg(2+) as cofactor.

The enzyme catalyses ATP + (deoxyribonucleotide)n-3'-hydroxyl + 5'-phospho-(deoxyribonucleotide)m = (deoxyribonucleotide)n+m + AMP + diphosphate.. DNA ligase that seals nicks in double-stranded DNA during DNA replication, DNA recombination and DNA repair. The sequence is that of Probable DNA ligase from Rhodococcus jostii (strain RHA1).